A 336-amino-acid chain; its full sequence is Delta(1)-pyrroline-2-carboxylate reductase (336 aa).

The Charge relay system role is filled by Ser-47. Residue His-48 is the Proton donor of the active site. Arg-52 contributes to the substrate binding site. 120-124 (HFSAL) contributes to the NADP(+) binding site. Residue Thr-160 participates in substrate binding. 178–180 (DFA) is a binding site for NADP(+). 186–187 (RG) contributes to the substrate binding site. Asp-188 acts as the Charge relay system in catalysis. Residues 229–230 (HK) and 304–310 (RLPSQRR) each bind NADP(+).

It belongs to the LDH2/MDH2 oxidoreductase family. In terms of assembly, homodimer.

It carries out the reaction L-proline + NAD(+) = 1-pyrroline-2-carboxylate + NADH + H(+). It catalyses the reaction L-proline + NADP(+) = 1-pyrroline-2-carboxylate + NADPH + H(+). In terms of biological role, catalyzes the reduction of Delta(1)-pyrroline-2-carboxylate (Pyr2C) to L-proline, using NADPH as the electron donor. May be involved in a degradation pathway that converts trans-3-hydroxy-L-proline (t3LHyp) to L-proline. The sequence is that of Delta(1)-pyrroline-2-carboxylate reductase from Pseudomonas fluorescens (strain ATCC BAA-477 / NRRL B-23932 / Pf-5).